The following is a 134-amino-acid chain: Profilin-1 (134 aa).

A disulfide bond links cysteine 13 and cysteine 118. An Involved in PIP2 interaction motif is present at residues 84–100; that stretch reads AVIRGKKGSGGITIKKT. Residue threonine 114 is modified to Phosphothreonine.

It belongs to the profilin family. Occurs in many kinds of cells as a complex with monomeric actin in a 1:1 ratio. In terms of processing, phosphorylated by MAP kinases.

It localises to the cytoplasm. The protein resides in the cytoskeleton. In terms of biological role, binds to actin and affects the structure of the cytoskeleton. At high concentrations, profilin prevents the polymerization of actin, whereas it enhances it at low concentrations. The polypeptide is Profilin-1 (Olea europaea (Common olive)).